The following is a 512-amino-acid chain: tRNA-2-methylthio-N(6)-dimethylallyladenosine synthase (512 aa).

The region spanning 17–133 (RTYEVRTFGC…LPTLLERSAH (117 aa)) is the MTTase N-terminal domain. The [4Fe-4S] cluster site is built by Cys-26, Cys-62, Cys-96, Cys-170, Cys-174, and Cys-177. A Radical SAM core domain is found at 156 to 392 (RESAYAGWVS…LALQERISEE (237 aa)). One can recognise a TRAM domain in the interval 395–461 (RKLIGTTQEL…PHFLIADGGV (67 aa)). The tract at residues 473 to 512 (TELGETPTTAPVGVGLGMPSIKKPEPTTAGGCSTGGCGCE) is disordered.

The protein belongs to the methylthiotransferase family. MiaB subfamily. Monomer. Requires [4Fe-4S] cluster as cofactor.

The protein resides in the cytoplasm. It catalyses the reaction N(6)-dimethylallyladenosine(37) in tRNA + (sulfur carrier)-SH + AH2 + 2 S-adenosyl-L-methionine = 2-methylsulfanyl-N(6)-dimethylallyladenosine(37) in tRNA + (sulfur carrier)-H + 5'-deoxyadenosine + L-methionine + A + S-adenosyl-L-homocysteine + 2 H(+). Functionally, catalyzes the methylthiolation of N6-(dimethylallyl)adenosine (i(6)A), leading to the formation of 2-methylthio-N6-(dimethylallyl)adenosine (ms(2)i(6)A) at position 37 in tRNAs that read codons beginning with uridine. In Corynebacterium jeikeium (strain K411), this protein is tRNA-2-methylthio-N(6)-dimethylallyladenosine synthase.